A 224-amino-acid chain; its full sequence is Phosphoglycolate phosphatase (224 aa).

The active-site Nucleophile is Asp-8. Residues Asp-8 and Asp-10 each contribute to the Mg(2+) site. A substrate-binding site is contributed by Lys-151. Residues Asp-174 and Asp-178 each contribute to the Mg(2+) site.

It belongs to the archaeal SPP-like hydrolase family. It depends on Mg(2+) as a cofactor.

It carries out the reaction 2-phosphoglycolate + H2O = glycolate + phosphate. In terms of biological role, catalyzes the dephosphorylation of 2-phosphoglycolate. This chain is Phosphoglycolate phosphatase, found in Thermoplasma volcanium (strain ATCC 51530 / DSM 4299 / JCM 9571 / NBRC 15438 / GSS1).